The primary structure comprises 157 residues: Small ribosomal subunit protein uS7 (157 aa).

The protein belongs to the universal ribosomal protein uS7 family. Part of the 30S ribosomal subunit. Contacts proteins S9 and S11.

Functionally, one of the primary rRNA binding proteins, it binds directly to 16S rRNA where it nucleates assembly of the head domain of the 30S subunit. Is located at the subunit interface close to the decoding center, probably blocks exit of the E-site tRNA. This Chlamydia muridarum (strain MoPn / Nigg) protein is Small ribosomal subunit protein uS7.